The chain runs to 244 residues: Thiol S-methyltransferase TMT1B (244 aa).

Residues 1-23 (MDALVLFLQLLVLLLTLPLHLLA) form the signal peptide.

The protein belongs to the methyltransferase superfamily.

The protein localises to the endoplasmic reticulum membrane. Its subcellular location is the lipid droplet. It is found in the microsome. The protein resides in the cytoplasm. It localises to the cytosol. The enzyme catalyses a thiol + S-adenosyl-L-methionine = a methyl thioether + S-adenosyl-L-homocysteine + H(+). Its function is as follows. Thiol S-methyltransferase that catalyzes the transfer of a methyl group from S-adenosyl-L-methionine to alkyl and phenolic thiol-containing acceptor substrates. Together with TMT1B accounts for most of S-thiol methylation activity in the endoplasmic reticulum of hepatocytes. Selectively methylates S-centered nucleophiles from metabolites such as hydrogen sulfide and dithiothreitol. The sequence is that of Thiol S-methyltransferase TMT1B from Mus musculus (Mouse).